Consider the following 54-residue polypeptide: Photoreceptor disk component PRCD (54 aa).

Cys2 carries the S-palmitoyl cysteine lipid modification. The segment at 24 to 54 (QPEPNGVDGAVSGSSLETDLQSSGREKEPLK) is disordered. Over residues 35-46 (SGSSLETDLQSS) the composition is skewed to polar residues.

It belongs to the PRCD family. As to quaternary structure, interacts with RHO/rhodopsin; the interaction promotes PRCD stability. Palmitoylated at Cys-2. Palmitoylation is essential for protein stability and trafficking to the photoreceptor outer segment, but does not appear to be essential for membrane localization. Probably palmitoylated by ZDHHC3. Post-translationally, phosphorylated. In terms of tissue distribution, expressed in retina (at protein level).

It is found in the cell projection. Its subcellular location is the cilium. The protein resides in the photoreceptor outer segment. The protein localises to the membrane. It localises to the endoplasmic reticulum. It is found in the golgi apparatus. Its function is as follows. Involved in vision. The chain is Photoreceptor disk component PRCD from Bos taurus (Bovine).